The chain runs to 569 residues: MKLKTVRSAVLSSLFASQVLGKIIPAANKRDDDSNSKFVKLPFHKLYGDSLENVGSDKKPEVRLLKRADGYEEIIITNQQSFYSVDLEVGTPPQNVTVLVDTGSSDLWIMGSDNPYCSSNSMGSSRRRVIDKRDDSSSGGSLINDINPFGWLTGTGSAIGPTATGLGGGSGTATQSVPASEATMDCQQYGTFSTSGSSTFRSNNTYFSISYGDGTFASGTFGTDVLDLSDLNVTGLSFAVANETNSTMGVLGIGLPELEVTYSGSTASHSGKAYKYDNFPIVLKNSGAIKSNTYSLYLNDSDAMHGTILFGAVDHSKYTGTLYTIPIVNTLSASGFSSPIQFDVTINGIGISDSGSSNKTLTTTKIPALLDSGTTLTYLPQTVVSMIATELGAQYSSRIGYYVLDCPSDDSMEIVFDFGGFHINAPLSSFILSTGTTCLLGIIPTSDDTGTILGDSFLTNAYVVYDLENLEISMAQARYNTTSENIEIITSSVPSAVKAPGYTNTWSTSASIVTGGNIFTVNSSQTASFSGNLTTSTASATSTSSKRNVGDHIVPSLPLTLISLLFAFI.

The signal sequence occupies residues 1-21 (MKLKTVRSAVLSSLFASQVLG). Positions 22 to 67 (KIIPAANKRDDDSNSKFVKLPFHKLYGDSLENVGSDKKPEVRLLKR) are excised as a propeptide. The 393-residue stretch at 83–475 (YSVDLEVGTP…DLENLEISMA (393 aa)) folds into the Peptidase A1 domain. Asparagine 95 is a glycosylation site (N-linked (GlcNAc...) asparagine). Aspartate 101 is a catalytic residue. N-linked (GlcNAc...) asparagine glycosylation is found at asparagine 203, asparagine 232, asparagine 242, asparagine 245, asparagine 299, and asparagine 358. Residue aspartate 371 is part of the active site. Residues asparagine 480, asparagine 522, and asparagine 532 are each glycosylated (N-linked (GlcNAc...) asparagine). A lipid anchor (GPI-anchor amidated asparagine) is attached at asparagine 548. A propeptide spans 549-569 (VGDHIVPSLPLTLISLLFAFI) (removed in mature form).

This sequence belongs to the peptidase A1 family. As to quaternary structure, consists of an alpha and a beta subunit, which are maintained together by a disulfide bond. Post-translationally, the zymogen is transported to the periplasm, where the propeptide is removed and the enzyme is further subjected to an internal, autocatalytic cleavage to generate an alpha/beta two-subunit endopeptidase. The proteolytic processing at the cell surface is regulated by the environmental pH. Extensively N-glycosylated.

The protein resides in the cell membrane. It carries out the reaction Hydrolyzes various precursor proteins with Arg or Lys in P1, and commonly Arg or Lys also in P2. The P3 amino acid is usually non-polar, but otherwise additional basic amino acids are favorable in both non-prime and prime positions.. Cleaves proteins C-terminally to mono- and paired-basic residues. Involved in the shedding of a subset of GPI-anchored plasma membrane proteins from the cell surface, including itself, GAS1 and MSB2. May also play a role in the maturation of GPI-mannoproteins associated with the cell wall. Can process the alpha-mating factor precursor. Required for cell wall integrity. The sequence is that of Aspartic proteinase 3 (YPS1) from Saccharomyces cerevisiae (strain ATCC 204508 / S288c) (Baker's yeast).